The sequence spans 132 residues: Small ribosomal subunit protein uS8 (132 aa).

This sequence belongs to the universal ribosomal protein uS8 family. As to quaternary structure, part of the 30S ribosomal subunit. Contacts proteins S5 and S12.

In terms of biological role, one of the primary rRNA binding proteins, it binds directly to 16S rRNA central domain where it helps coordinate assembly of the platform of the 30S subunit. The sequence is that of Small ribosomal subunit protein uS8 from Exiguobacterium sibiricum (strain DSM 17290 / CCUG 55495 / CIP 109462 / JCM 13490 / 255-15).